A 194-amino-acid polypeptide reads, in one-letter code: Large ribosomal subunit protein bL9 (194 aa).

The segment at 165–194 (PEDAEEAVANEEEAEAALLDDEDADEYEQG) is disordered. A compositionally biased stretch (acidic residues) spans 166 to 194 (EDAEEAVANEEEAEAALLDDEDADEYEQG).

The protein belongs to the bacterial ribosomal protein bL9 family.

Binds to the 23S rRNA. This is Large ribosomal subunit protein bL9 from Rhodospirillum rubrum (strain ATCC 11170 / ATH 1.1.1 / DSM 467 / LMG 4362 / NCIMB 8255 / S1).